A 143-amino-acid polypeptide reads, in one-letter code: Submaxillary gland androgen-regulated protein 2, isoform gamma (143 aa).

The signal sequence occupies residues 1–22 (MKALYMVFVLWVLIGCFLSSEC). The segment at 28-50 (GQHDPTRPLSPSNPSSHFYPQPD) is disordered. Residues 36 to 45 (LSPSNPSSHF) show a composition bias toward polar residues.

It is found in the secreted. In terms of biological role, may play a role in protection or detoxification. This Mus musculus (Mouse) protein is Submaxillary gland androgen-regulated protein 2, isoform gamma (Smr2).